A 586-amino-acid chain; its full sequence is Phosphomethylpyrimidine synthase (586 aa).

The tract at residues 1 to 33 is disordered; the sequence is MKQSVSAEQIELKSSLPGSKKVYVDGPREGMKV. A compositionally biased stretch (basic and acidic residues) spans 22–33; that stretch reads VYVDGPREGMKV. Residues asparagine 193, methionine 222, tyrosine 251, histidine 287, 307-309, 348-351, and glutamate 387 each bind substrate; these read SRG and DGLR. Histidine 391 provides a ligand contact to Zn(2+). Tyrosine 414 lines the substrate pocket. Histidine 455 contributes to the Zn(2+) binding site. [4Fe-4S] cluster-binding residues include cysteine 535, cysteine 538, and cysteine 543.

It belongs to the ThiC family. [4Fe-4S] cluster serves as cofactor.

The catalysed reaction is 5-amino-1-(5-phospho-beta-D-ribosyl)imidazole + S-adenosyl-L-methionine = 4-amino-2-methyl-5-(phosphooxymethyl)pyrimidine + CO + 5'-deoxyadenosine + formate + L-methionine + 3 H(+). The protein operates within cofactor biosynthesis; thiamine diphosphate biosynthesis. Its function is as follows. Catalyzes the synthesis of the hydroxymethylpyrimidine phosphate (HMP-P) moiety of thiamine from aminoimidazole ribotide (AIR) in a radical S-adenosyl-L-methionine (SAM)-dependent reaction. The chain is Phosphomethylpyrimidine synthase from Bacillus cereus (strain G9842).